The primary structure comprises 1281 residues: Dynactin subunit 1 (1281 aa).

The disordered stretch occupies residues 1–26 (MAQSRRHMSSRTPSGSRMSTEASARP). A compositionally biased stretch (polar residues) spans 10–22 (SRTPSGSRMSTEA). The 43-residue stretch at 48–90 (GATLFATGKWVGVILDEAKGKNDGTVQGRKYFTCDEGHGIFVR) folds into the CAP-Gly domain. The interval 100–221 (GADTTSPETP…SPSKEEEGLR (122 aa)) is disordered. Over residues 102–114 (DTTSPETPDSSAS) the composition is skewed to polar residues. T108, T145, T146, and T147 each carry phosphothreonine. Positions 129–152 (SKLRGLKPKKAPTARKTTTRRPKP) are enriched in basic residues. Over residues 161–205 (AGPSSSLGPSGSASAGELSSSEPSTPAQTPLAAPIIPTPALTSPG) the composition is skewed to low complexity. S179 carries the phosphoserine; by PLK1 modification. S212 is modified (phosphoserine; by CDK1). 3 coiled-coil regions span residues 214-547 (SKEE…RQQQ), 943-1049 (LKLE…EGLR), and 1185-1214 (SAQL…KETV). The interval 911–1281 (EYDAERPPSK…LHQLHSRLIS (371 aa)) is interaction with HPS6.

It belongs to the dynactin 150 kDa subunit family. Monomer and homodimer. Subunit of dynactin, a multiprotein complex part of a tripartite complex with dynein and a adapter, such as BICDL1, BICD2 or HOOK3. The dynactin complex is built around ACTR1A/ACTB filament and consists of an actin-related filament composed of a shoulder domain, a pointed end and a barbed end. Its length is defined by its flexible shoulder domain. The soulder is composed of 2 DCTN1 subunits, 4 DCTN2 and 2 DCTN3. DCTN1/p150(glued) binds directly to microtubules and to cytoplasmic dynein. The 4 DCNT2 (via N-terminus) bind the ACTR1A filament and act as molecular rulers to determine the length. The pointed end is important for binding dynein-dynactin cargo adapters. Consists of 4 subunits: ACTR10, DCNT4, DCTN5 and DCTN6. The barbed end is composed of a CAPZA1:CAPZB heterodimers, which binds ACTR1A/ACTB filament and dynactin and stabilizes dynactin. Interacts with the C-terminus of MAPRE1, MAPRE2 and MAPRE3. Interacts with FBXL5. Interacts with ECPAS. Interacts with CLIP1. Interacts with CLN3 and DYNAP. Interacts with MISP; this interaction regulates its distribution at the cell cortex. Interacts with CEP131. Interacts with CEP126. Interacts with dynein intermediate chain and dynein heavy chain. Interacts with PLK1 (via POLO-box domain). Interacts with TBCB and PARD6A. Binds preferentially to tyrosinated microtubules than to detyrosinated microtubules. Interacts with KIF3A. Interacts with HPS6. Interacts with SNX6. Interacts with BICD2. Interacts with DST (isoform 1). Identified in a complex with MREG and RILP. Interacts with BCCIP. Interacts with DCDC1. Interacts with AKNA. Interacts with DYNC1I2. Interacts with RUFY3 and RUFY4. Ubiquitinated by a SCF complex containing FBXL5, leading to its degradation by the proteasome. Post-translationally, phosphorylation by SLK at Thr-145, Thr-146 and Thr-147 targets DCTN1 to the centrosome. It is uncertain if SLK phosphorylates all three threonines or one or two of them. PLK1-mediated phosphorylation at Ser-179 is essential for its localization in the nuclear envelope and promotes its dissociation from microtubules during early mitosis and positively regulates nuclear envelope breakdown during prophase.

The protein localises to the cytoplasm. It localises to the cytoskeleton. The protein resides in the microtubule organizing center. Its subcellular location is the centrosome. It is found in the centriole. The protein localises to the spindle. It localises to the nucleus envelope. The protein resides in the cell cortex. In terms of biological role, part of the dynactin complex that activates the molecular motor dynein for ultra-processive transport along microtubules. Plays a key role in dynein-mediated retrograde transport of vesicles and organelles along microtubules by recruiting and tethering dynein to microtubules. Binds to both dynein and microtubules providing a link between specific cargos, microtubules and dynein. Essential for targeting dynein to microtubule plus ends, recruiting dynein to membranous cargos and enhancing dynein processivity (the ability to move along a microtubule for a long distance without falling off the track). Can also act as a brake to slow the dynein motor during motility along the microtubule. Can regulate microtubule stability by promoting microtubule formation, nucleation and polymerization and by inhibiting microtubule catastrophe in neurons. Inhibits microtubule catastrophe by binding both to microtubules and to tubulin, leading to enhanced microtubule stability along the axon. Plays a role in metaphase spindle orientation. Plays a role in centriole cohesion and subdistal appendage organization and function. Its recruitment to the centriole in a KIF3A-dependent manner is essential for the maintenance of centriole cohesion and the formation of subdistal appendage. Also required for microtubule anchoring at the mother centriole. Plays a role in primary cilia formation. The polypeptide is Dynactin subunit 1 (Dctn1) (Mus musculus (Mouse)).